The chain runs to 82 residues: Mu-conotoxin MrVIB (82 aa).

An N-terminal signal peptide occupies residues 1-22 (MKLTCMMIVAVLFLTAWTLVMA). A propeptide spanning residues 23-49 (DDSNNGLANHFLKSRDEMEDPEASKLE) is cleaved from the precursor. Intrachain disulfides connect cysteine 53–cysteine 71, cysteine 60–cysteine 76, and cysteine 70–cysteine 81.

This sequence belongs to the conotoxin O1 superfamily. As to expression, expressed by the venom duct.

The protein resides in the secreted. Its function is as follows. MuO-conotoxins are gating-modifier toxins that inhibit sodium current by trapping the domain II voltage sensor in the closed position to prevent opening of the sodium channel. This toxin has a preference for Nav1.4/SCN4A over Nav1.2/SCN2A sodium channels. It blocks Nav channels by interacting mainly with the C-terminal part of the pore loop of domain-3. It also blocks fast-inactivating calcium current. Blocks Nav1.8/SCN10A sodium channels and has potent and long-lasting local anesthetic effects. It can also block propagation of action potentials in A- and C-fibers in sciatic nerve as well as skeletal muscle in isolated preparations. The polypeptide is Mu-conotoxin MrVIB (Conus marmoreus (Marble cone)).